Consider the following 454-residue polypeptide: Transmembrane protein adipocyte-associated 1 homolog (454 aa).

Asparagine 26 and asparagine 44 each carry an N-linked (GlcNAc...) asparagine glycan. A run of 5 helical transmembrane segments spans residues 80–100, 113–133, 151–171, 180–200, and 224–244; these read AILI…TSVI, AFTL…VYSM, IIIK…GLLF, ILIA…VQVI, and FVFW…IMCL. An N-linked (GlcNAc...) asparagine glycan is attached at asparagine 258. Helical transmembrane passes span 262–282 and 290–310; these read FIYC…AALI and LCFV…IIYF. Residues asparagine 322 and asparagine 323 are each glycosylated (N-linked (GlcNAc...) asparagine). The disordered stretch occupies residues 408-454; sequence RTGSDDFAHHRDSMLSEPSTGTTTRHLKGLGPQGSLVFEEDPSSLRL. Over residues 410–421 the composition is skewed to basic and acidic residues; it reads GSDDFAHHRDSM. The segment covering 445–454 has biased composition (acidic residues); sequence FEEDPSSLRL.

The protein belongs to the UPF0359 family.

It is found in the membrane. This chain is Transmembrane protein adipocyte-associated 1 homolog (tpra-1), found in Caenorhabditis briggsae.